Reading from the N-terminus, the 156-residue chain is Small ribosomal subunit protein uS7 (156 aa).

Belongs to the universal ribosomal protein uS7 family. In terms of assembly, part of the 30S ribosomal subunit. Contacts proteins S9 and S11.

One of the primary rRNA binding proteins, it binds directly to 16S rRNA where it nucleates assembly of the head domain of the 30S subunit. Is located at the subunit interface close to the decoding center, probably blocks exit of the E-site tRNA. The protein is Small ribosomal subunit protein uS7 of Pseudomonas fluorescens (strain SBW25).